Reading from the N-terminus, the 172-residue chain is Transcriptional repressor NrdR (172 aa).

A zinc finger spans residues 3–34 (CPFCSYSDNRVLESRLAEEGESVRRRRECKQC). Residues 49 to 139 (TVVIKRNGRR…VYRKFKGVAD (91 aa)) enclose the ATP-cone domain.

It belongs to the NrdR family. Zn(2+) serves as cofactor.

In terms of biological role, negatively regulates transcription of bacterial ribonucleotide reductase nrd genes and operons by binding to NrdR-boxes. In Gloeobacter violaceus (strain ATCC 29082 / PCC 7421), this protein is Transcriptional repressor NrdR.